A 450-amino-acid chain; its full sequence is tRNA modification GTPase MnmE (450 aa).

Positions 23, 80, and 123 each coordinate (6S)-5-formyl-5,6,7,8-tetrahydrofolate. The region spanning 219–372 (GLHVVLAGQP…LRARLLQMAG (154 aa)) is the TrmE-type G domain. Asn229 contacts K(+). GTP is bound by residues 229–234 (NVGKSS), 248–254 (TPIAGTT), and 273–276 (DTAG). Position 233 (Ser233) interacts with Mg(2+). Residues Thr248, Ile250, and Thr253 each coordinate K(+). Thr254 is a Mg(2+) binding site. Lys450 contributes to the (6S)-5-formyl-5,6,7,8-tetrahydrofolate binding site.

This sequence belongs to the TRAFAC class TrmE-Era-EngA-EngB-Septin-like GTPase superfamily. TrmE GTPase family. In terms of assembly, homodimer. Heterotetramer of two MnmE and two MnmG subunits. The cofactor is K(+).

It is found in the cytoplasm. In terms of biological role, exhibits a very high intrinsic GTPase hydrolysis rate. Involved in the addition of a carboxymethylaminomethyl (cmnm) group at the wobble position (U34) of certain tRNAs, forming tRNA-cmnm(5)s(2)U34. This Bordetella avium (strain 197N) protein is tRNA modification GTPase MnmE.